The primary structure comprises 183 residues: MAPLVGLFLIWAGASVFQQLHPVNGGDIPDPGSKPTPPGMADELPTETYDLPPEIYTTTFLPRTIYPQEEMPYDDKPFPSLLSKANDLNAVFEGPACAFPFTYKGKKYYMCTRKNSVLLWCSLDTEYQGNWKFCTERDEPECVFPFIYRKKSYESCTRVHSFFWRRWCSLTSNYDRDKAWKYC.

The signal sequence occupies residues 1-25 (MAPLVGLFLIWAGASVFQQLHPVNG). The interval 23-47 (VNGGDIPDPGSKPTPPGMADELPTE) is disordered. 6 O-linked (GalNAc...) threonine glycosylation sites follow: Thr-36, Thr-46, Thr-57, Thr-58, Thr-59, and Thr-64. Fibronectin type-II domains are found at residues 92 to 136 (FEGP…FCTE) and 137 to 183 (RDEP…WKYC). 4 disulfide bridges follow: Cys-97/Cys-121, Cys-111/Cys-134, Cys-142/Cys-168, and Cys-156/Cys-183.

It belongs to the seminal plasma protein family.

It localises to the secreted. Functionally, binds to spermatozoa upon ejaculation and may play a role in sperm capacitation. Displays heparin-, gelatin- and phospholipid-binding activities. The chain is Seminal plasma protein BSP-30 kDa from Bos taurus (Bovine).